The primary structure comprises 1009 residues: Adhesion G-protein coupled receptor G2 (1009 aa).

Residues 1-37 (MLFSGGQYSPVGRPEEVLLIYKIFLVIICFHVILVTS) form the signal peptide. The Extracellular portion of the chain corresponds to 38 to 617 (LKENGNSSLL…SRTSLPPSQM (580 aa)). Asn-43, Asn-77, Asn-91, Asn-103, Asn-109, Asn-127, Asn-136, Asn-154, Asn-178, and Asn-186 each carry an N-linked (GlcNAc...) asparagine glycan. Disordered stretches follow at residues 279-305 (MTPS…ASSP) and 325-346 (SHTL…PSVP). Positions 280 to 293 (TPSTPSLTQESNLP) are enriched in polar residues. Asn-362, Asn-427, Asn-448, Asn-453, Asn-520, Asn-534, Asn-539, Asn-543, and Asn-589 each carry an N-linked (GlcNAc...) asparagine glycan. The GAIN-B domain maps to 453–611 (NTTTFAAQDP…GILLDLSRTS (159 aa)). Intrachain disulfides connect Cys-562-Cys-593 and Cys-581-Cys-595. The interval 562 to 611 (CVFWDLGRNGGKGGWSSDGCSVKDKRMNETICTCSHLTSFGILLDLSRTS) is GPS. Residues 600 to 611 (SFGILLDLSRTS) form a stachel region. A helical transmembrane segment spans residues 618 to 640 (MALTFITYIGCGLSSIFLSVTLV). Over 641–655 (TYIAFEKIRRDYPSK) the chain is Cytoplasmic. A helical membrane pass occupies residues 656 to 679 (ILIQLCAALLLLNLIFLLDSWIAL). Residues 680–683 (YNTR) lie on the Extracellular side of the membrane. A helical transmembrane segment spans residues 684-709 (GFCIAVAVFLHYFLLVSFTWMGLEAF). Residues Cys-686 and Cys-770 are joined by a disulfide bond. The Cytoplasmic portion of the chain corresponds to 710-728 (HMYLALVKVFNTYIRKYIL). Residues 729-751 (KFCIVGWGIPAVVVSIVLTISPD) form a helical membrane-spanning segment. The Extracellular portion of the chain corresponds to 752–776 (NYGIGSYGKFPNGTPDDFCWINSNV). The chain crosses the membrane as a helical span at residues 777 to 802 (VFYITVVGYFCVIFLLNVSMFIVVLV). The Cytoplasmic portion of the chain corresponds to 803–823 (QLCRIKKKKQLGAQRKTSIQD). A helical membrane pass occupies residues 824–845 (LRSIAGLTFLLGITWGFAFFAW). Residues 846–850 (GPVNV) lie on the Extracellular side of the membrane. N-linked (GlcNAc...) asparagine glycosylation occurs at Asn-849. The helical transmembrane segment at 851–872 (TFMYLFAIFNTLQGFFIFIFYC) threads the bilayer. Asn-860 lines the 3beta-hydroxyandrost-5-en-17-one pocket. Residues 873–1009 (AAKENVRKQW…RGSLHFIEQM (137 aa)) are Cytoplasmic-facing. A Phosphoserine modification is found at Ser-1002.

This sequence belongs to the G-protein coupled receptor 2 family. Adhesion G-protein coupled receptor (ADGR) subfamily. Heterodimer of 2 chains generated by proteolytic processing; the large extracellular N-terminal fragment and the membrane-bound C-terminal fragment predominantly remain associated and non-covalently linked. Interacts with CFTR. Proteolytically cleaved into 2 subunits, an extracellular subunit and a seven-transmembrane subunit. In terms of processing, highly glycosylated. Epididymis-specific expression (at protein level). Associated with apical membranes of efferent ductule and proximal epididymal duct epithelia. Mainly expressed in the nonciliated principal cells of the proximal excurrent ducts.

The protein resides in the apical cell membrane. With respect to regulation, forms a heterodimer of 2 chains generated by proteolytic processing that remain associated through non-covalent interactions mediated by the GAIN-B domain. In the inactivated receptor, the Stachel sequence (also named stalk) is embedded in the GAIN-B domain, where it adopts a beta-strand conformation. On activation, the Stachel moves into the 7 transmembrane region and adopts a twisted hook-shaped configuration that forms contacts within the receptor, leading to coupling of a G-alpha protein, which activates signaling. The cleaved GAIN-B and N-terminal domains can then dissociate from the rest of the receptor. Deoxycorticosterone (DOC) acts as an antagonist of ADGRG2. Functionally, adhesion G-protein coupled receptor (aGPCR) for steroid hormones, such as dehydroepiandrosterone (DHEA; also named 3beta-hydroxyandrost-5-en-17-one) and androstenedione. Involved in a signal transduction pathway controlling epididymal function and male fertility. Ligand binding causes a conformation change that triggers signaling via guanine nucleotide-binding proteins (G proteins) and modulates the activity of downstream effectors, such as adenylate cyclase. ADGRG2 is coupled to G(s) G proteins and mediates activation of adenylate cyclase activity. Also able to couple with G(q) G proteins in vitro. May regulate fluid exchange within epididymis. The polypeptide is Adhesion G-protein coupled receptor G2 (Mus musculus (Mouse)).